The following is a 256-amino-acid chain: Thiazole synthase (256 aa).

Lys-95 functions as the Schiff-base intermediate with DXP in the catalytic mechanism. Residues Gly-156, 182–183, and 204–205 contribute to the 1-deoxy-D-xylulose 5-phosphate site; these read AG and NT.

It belongs to the ThiG family. Homotetramer. Forms heterodimers with either ThiH or ThiS.

The protein resides in the cytoplasm. It catalyses the reaction [ThiS sulfur-carrier protein]-C-terminal-Gly-aminoethanethioate + 2-iminoacetate + 1-deoxy-D-xylulose 5-phosphate = [ThiS sulfur-carrier protein]-C-terminal Gly-Gly + 2-[(2R,5Z)-2-carboxy-4-methylthiazol-5(2H)-ylidene]ethyl phosphate + 2 H2O + H(+). Its pathway is cofactor biosynthesis; thiamine diphosphate biosynthesis. In terms of biological role, catalyzes the rearrangement of 1-deoxy-D-xylulose 5-phosphate (DXP) to produce the thiazole phosphate moiety of thiamine. Sulfur is provided by the thiocarboxylate moiety of the carrier protein ThiS. In vitro, sulfur can be provided by H(2)S. The sequence is that of Thiazole synthase from Escherichia coli O6:H1 (strain CFT073 / ATCC 700928 / UPEC).